The following is a 345-amino-acid chain: MSKQSLSYKDAGVDINAGNELVERIKPHVKRTTRSEVIGGLGGFGALCALPAKYKEPVLVSGTDGVGTKLRLAIDLKKHDTIGIDLVAMCVNDLVVQGAEPLFFLDYYATGKLDVDVAADVVKGIAEGCVQSSCALVGGETAEMPGMYREGDYDLAGFCVGVVEKSKILDGSKVQAGDALIALASSGPHSNGYSLVRKVIEVAGVNPATEQLAGKPLAEQVLAPTKIYVKSVLELIEKTDVHAIAHLTGGGFWENIPRVLPENVKAVIDETSWDWQPVFKWLQEQGNITRHEMYRTFNCGVGMVLALPQAEADKALDILRAAGENAWLIGRIEALNAGEQQVIIR.

This sequence belongs to the AIR synthase family.

It localises to the cytoplasm. The catalysed reaction is 2-formamido-N(1)-(5-O-phospho-beta-D-ribosyl)acetamidine + ATP = 5-amino-1-(5-phospho-beta-D-ribosyl)imidazole + ADP + phosphate + H(+). Its pathway is purine metabolism; IMP biosynthesis via de novo pathway; 5-amino-1-(5-phospho-D-ribosyl)imidazole from N(2)-formyl-N(1)-(5-phospho-D-ribosyl)glycinamide: step 2/2. In Actinobacillus succinogenes (strain ATCC 55618 / DSM 22257 / CCUG 43843 / 130Z), this protein is Phosphoribosylformylglycinamidine cyclo-ligase.